The primary structure comprises 405 residues: MANIVVKRLERTPIDETPVEIVERKGMGHPDSICDGIAESVSVALCKMYKEKMGVVLHHNTDQVELVGGYAYPEVGGGCMVSPIYILLSGRATMEVLDKEAGKVIKLPVNTTAVNAARDYLKKAIRNMDLEKDVVVDCRIGQGSVDLVEVFDRKRSEIPHANDTSFGVGHAPLSTTEKIVLETEKLLNSDALKAEIPAVGEDIKVMGLREGKKITLTIAMAAVDKYVNSCADYVKVKELAKAKVEENAKKYLDGHELEVCINTADDDEDCIFLTVTGTSAEMGDDGSVGRGNRANGLITPFRPMSMEATSGKNPINHIGKIYNILSNIIAEDVAKIEGVRECQIRILSQIGKPITEPKILDIEMIPENGFELEELSPKAKEVAQKWLDNISEVTERIVSGNVTTF.

ATP is bound at residue 141–146 (GQGSVD).

Belongs to the AdoMet synthase 2 family. Requires Mg(2+) as cofactor.

It carries out the reaction L-methionine + ATP + H2O = S-adenosyl-L-methionine + phosphate + diphosphate. It functions in the pathway amino-acid biosynthesis; S-adenosyl-L-methionine biosynthesis; S-adenosyl-L-methionine from L-methionine: step 1/1. In terms of biological role, catalyzes the formation of S-adenosylmethionine from methionine and ATP. The polypeptide is S-adenosylmethionine synthase (Methanococcus maripaludis (strain C6 / ATCC BAA-1332)).